A 208-amino-acid chain; its full sequence is Probable GTP-binding protein EngB (208 aa).

One can recognise an EngB-type G domain in the interval 23 to 205; it reads LTSEMVILGR…RQTLLKYLLT (183 aa). GTP-binding positions include 31–38, 57–61, 84–87, 154–157, and 182–184; these read GRSNVGKS, GKTRL, DLPG, TKFD, and FNA. The Mg(2+) site is built by Ser-38 and Thr-59.

Belongs to the TRAFAC class TrmE-Era-EngA-EngB-Septin-like GTPase superfamily. EngB GTPase family. Mg(2+) serves as cofactor.

In terms of biological role, necessary for normal cell division and for the maintenance of normal septation. In Helicobacter pylori (strain P12), this protein is Probable GTP-binding protein EngB.